Here is a 339-residue protein sequence, read N- to C-terminus: Ketol-acid reductoisomerase (NADP(+)) (339 aa).

The 182-residue stretch at 1–182 (MRVYYDSDAD…GGGRAGIIET (182 aa)) folds into the KARI N-terminal Rossmann domain. NADP(+) contacts are provided by residues 24–27 (YGSQ), Arg-48, Ser-51, and 83–86 (DEGQ). His-108 is a catalytic residue. Residue Gly-134 participates in NADP(+) binding. The 146-residue stretch at 183–328 (TFKEECETDL…EKLRAMMPWI (146 aa)) folds into the KARI C-terminal knotted domain. Asp-191, Glu-195, Glu-227, and Glu-231 together coordinate Mg(2+). Ser-252 contributes to the substrate binding site.

The protein belongs to the ketol-acid reductoisomerase family. Requires Mg(2+) as cofactor.

It carries out the reaction (2R)-2,3-dihydroxy-3-methylbutanoate + NADP(+) = (2S)-2-acetolactate + NADPH + H(+). It catalyses the reaction (2R,3R)-2,3-dihydroxy-3-methylpentanoate + NADP(+) = (S)-2-ethyl-2-hydroxy-3-oxobutanoate + NADPH + H(+). Its pathway is amino-acid biosynthesis; L-isoleucine biosynthesis; L-isoleucine from 2-oxobutanoate: step 2/4. The protein operates within amino-acid biosynthesis; L-valine biosynthesis; L-valine from pyruvate: step 2/4. Functionally, involved in the biosynthesis of branched-chain amino acids (BCAA). Catalyzes an alkyl-migration followed by a ketol-acid reduction of (S)-2-acetolactate (S2AL) to yield (R)-2,3-dihydroxy-isovalerate. In the isomerase reaction, S2AL is rearranged via a Mg-dependent methyl migration to produce 3-hydroxy-3-methyl-2-ketobutyrate (HMKB). In the reductase reaction, this 2-ketoacid undergoes a metal-dependent reduction by NADPH to yield (R)-2,3-dihydroxy-isovalerate. The polypeptide is Ketol-acid reductoisomerase (NADP(+)) (Acidiphilium cryptum (strain JF-5)).